Here is a 446-residue protein sequence, read N- to C-terminus: Phosphoglucosamine mutase (446 aa).

Serine 102 (phosphoserine intermediate) is an active-site residue. 4 residues coordinate Mg(2+): serine 102, aspartate 241, aspartate 243, and aspartate 245. Serine 102 is subject to Phosphoserine.

It belongs to the phosphohexose mutase family. It depends on Mg(2+) as a cofactor. Activated by phosphorylation.

The catalysed reaction is alpha-D-glucosamine 1-phosphate = D-glucosamine 6-phosphate. Catalyzes the conversion of glucosamine-6-phosphate to glucosamine-1-phosphate. The chain is Phosphoglucosamine mutase from Xylella fastidiosa (strain M12).